The chain runs to 57 residues: UPF0391 membrane protein bsl5717 (57 aa).

2 helical membrane passes run 6 to 26 (WALI…TGIS) and 35 to 55 (FLFY…LTIF).

Belongs to the UPF0391 family.

Its subcellular location is the cell membrane. This Bradyrhizobium diazoefficiens (strain JCM 10833 / BCRC 13528 / IAM 13628 / NBRC 14792 / USDA 110) protein is UPF0391 membrane protein bsl5717.